Reading from the N-terminus, the 377-residue chain is Putative FBD-associated F-box protein At5g44940 (377 aa).

In terms of domain architecture, F-box spans 4–50 (FDYISEFPDCLLTQILLNLPTKDSVKTSVLSKRWRNLWLNVPGLRLR). Residues 297-346 (IDFHKVPQCLISTLEYVQIEELILKEKSGIKLVDYFLENSAVLKKLTLSF) form the FBD domain.

In Arabidopsis thaliana (Mouse-ear cress), this protein is Putative FBD-associated F-box protein At5g44940.